The following is a 607-amino-acid chain: Elongation factor 4 (607 aa).

Positions 11-193 (SKIRNFSIIA…QIVEKVPAPA (183 aa)) constitute a tr-type G domain. GTP-binding positions include 23–28 (DHGKST) and 140–143 (NKID).

Belongs to the TRAFAC class translation factor GTPase superfamily. Classic translation factor GTPase family. LepA subfamily.

It localises to the cell membrane. It catalyses the reaction GTP + H2O = GDP + phosphate + H(+). Required for accurate and efficient protein synthesis under certain stress conditions. May act as a fidelity factor of the translation reaction, by catalyzing a one-codon backward translocation of tRNAs on improperly translocated ribosomes. Back-translocation proceeds from a post-translocation (POST) complex to a pre-translocation (PRE) complex, thus giving elongation factor G a second chance to translocate the tRNAs correctly. Binds to ribosomes in a GTP-dependent manner. The sequence is that of Elongation factor 4 from Bacillus cereus (strain ATCC 14579 / DSM 31 / CCUG 7414 / JCM 2152 / NBRC 15305 / NCIMB 9373 / NCTC 2599 / NRRL B-3711).